The sequence spans 102 residues: Small ribosomal subunit protein bS6 (102 aa).

The protein belongs to the bacterial ribosomal protein bS6 family.

Binds together with bS18 to 16S ribosomal RNA. In Deinococcus radiodurans (strain ATCC 13939 / DSM 20539 / JCM 16871 / CCUG 27074 / LMG 4051 / NBRC 15346 / NCIMB 9279 / VKM B-1422 / R1), this protein is Small ribosomal subunit protein bS6 (rpsF).